The primary structure comprises 1241 residues: ATP-dependent helicase/nuclease subunit A (1241 aa).

Residues S12–R485 enclose the UvrD-like helicase ATP-binding domain. Residue A33–T40 participates in ATP binding. The UvrD-like helicase C-terminal domain maps to G505 to G805.

The protein belongs to the helicase family. AddA subfamily. As to quaternary structure, heterodimer of AddA and AddB/RexB. It depends on Mg(2+) as a cofactor.

It carries out the reaction Couples ATP hydrolysis with the unwinding of duplex DNA by translocating in the 3'-5' direction.. It catalyses the reaction ATP + H2O = ADP + phosphate + H(+). In terms of biological role, the heterodimer acts as both an ATP-dependent DNA helicase and an ATP-dependent, dual-direction single-stranded exonuclease. Recognizes the chi site generating a DNA molecule suitable for the initiation of homologous recombination. The AddA nuclease domain is required for chi fragment generation; this subunit has the helicase and 3' -&gt; 5' nuclease activities. The chain is ATP-dependent helicase/nuclease subunit A from Bacillus mycoides (strain KBAB4) (Bacillus weihenstephanensis).